Consider the following 552-residue polypeptide: 5'-AMP-activated protein kinase catalytic subunit alpha-2 (552 aa).

Residues 16–268 (YVLGDTLGVG…IKDIREHEWF (253 aa)) form the Protein kinase domain. Residues 22-30 (LGVGTFGKV) and Lys-45 each bind ATP. Asp-139 functions as the Proton acceptor in the catalytic mechanism. At Thr-172 the chain carries Phosphothreonine; by LKB1 and CaMKK2. A Phosphothreonine modification is found at Thr-258. An AIS region spans residues 291–376 (EAVKEVCEKF…PERMPPLIAD (86 aa)). The residue at position 377 (Ser-377) is a Phosphoserine. The tract at residues 477-521 (VEQRSGSSTPQRSCSAAGLHRPRSSFDSTTAESHSLSGSLTGSLT) is disordered. A compositionally biased stretch (polar residues) spans 480–490 (RSGSSTPQRSC). At Ser-491 the chain carries Phosphoserine. The segment covering 501–510 (SFDSTTAESH) has biased composition (polar residues). Residues 511–521 (SLSGSLTGSLT) show a composition bias toward low complexity.

The protein belongs to the protein kinase superfamily. CAMK Ser/Thr protein kinase family. SNF1 subfamily. AMPK is a heterotrimer of an alpha catalytic subunit (PRKAA1 or PRKAA2), a beta (PRKAB1 or PRKAB2) and a gamma non-catalytic subunits (PRKAG1, PRKAG2 or PRKAG3). Interacts with FNIP1 and FNIP2. Associates with internalized insulin receptor/INSR complexes on Golgi/endosomal membranes; PRKAA2/AMPK2 together with ATIC and HACD3/PTPLAD1 is proposed to be part of a signaling network regulating INSR autophosphorylation and endocytosis. Interacts with ARF6. The phosphorylated form at Thr-172 mediated by CamKK2 interacts with ACSS2. The cofactor is Mg(2+). Post-translationally, ubiquitinated. Phosphorylated at Thr-172 by STK11/LKB1 in complex with STE20-related adapter-alpha (STRADA) pseudo kinase and CAB39. Also phosphorylated at Thr-172 by CAMKK2; triggered by a rise in intracellular calcium ions, without detectable changes in the AMP/ATP ratio. CAMKK1 can also phosphorylate Thr-172, but at much lower level. Dephosphorylated by protein phosphatase 2A and 2C (PP2A and PP2C). Phosphorylated by ULK1; leading to negatively regulate AMPK activity and suggesting the existence of a regulatory feedback loop between ULK1 and AMPK. Dephosphorylated by PPM1A and PPM1B at Thr-172 (mediated by STK11/LKB1).

It is found in the cytoplasm. The protein localises to the nucleus. It carries out the reaction L-seryl-[protein] + ATP = O-phospho-L-seryl-[protein] + ADP + H(+). It catalyses the reaction L-threonyl-[protein] + ATP = O-phospho-L-threonyl-[protein] + ADP + H(+). The enzyme catalyses L-seryl-[acetyl-CoA carboxylase] + ATP = O-phospho-L-seryl-[acetyl-CoA carboxylase] + ADP + H(+). The catalysed reaction is L-seryl-[3-hydroxy-3-methylglutaryl-coenzyme A reductase] + ATP = O-phospho-L-seryl-[3-hydroxy-3-methylglutaryl-coenzyme A reductase] + ADP + H(+). With respect to regulation, activated by phosphorylation on Thr-172. Binding of AMP to non-catalytic gamma subunit (PRKAG1, PRKAG2 or PRKAG3) results in allosteric activation, inducing phosphorylation on Thr-172. AMP-binding to gamma subunit also sustains activity by preventing dephosphorylation of Thr-172. ADP also stimulates Thr-172 phosphorylation, without stimulating already phosphorylated AMPK. ATP promotes dephosphorylation of Thr-172, rendering the enzyme inactive. Under physiological conditions AMPK mainly exists in its inactive form in complex with ATP, which is much more abundant than AMP. AMPK is activated by antihyperglycemic drug metformin, a drug prescribed to patients with type 2 diabetes: in vivo, metformin seems to mainly inhibit liver gluconeogenesis. However, metformin can be used to activate AMPK in muscle and other cells in culture or ex vivo. Selectively inhibited by compound C (6-[4-(2-Piperidin-1-yl-ethoxy)-phenyl)]-3-pyridin-4-yl-pyyrazolo[1,5-a] pyrimidine. Activated by resveratrol, a natural polyphenol present in red wine, and S17834, a synthetic polyphenol. Salicylate/aspirin directly activates kinase activity, primarily by inhibiting Thr-172 dephosphorylation. Functionally, catalytic subunit of AMP-activated protein kinase (AMPK), an energy sensor protein kinase that plays a key role in regulating cellular energy metabolism. In response to reduction of intracellular ATP levels, AMPK activates energy-producing pathways and inhibits energy-consuming processes: inhibits protein, carbohydrate and lipid biosynthesis, as well as cell growth and proliferation. AMPK acts via direct phosphorylation of metabolic enzymes, and by longer-term effects via phosphorylation of transcription regulators. Regulates lipid synthesis by phosphorylating and inactivating lipid metabolic enzymes such as ACACA, ACACB, GYS1, HMGCR and LIPE; regulates fatty acid and cholesterol synthesis by phosphorylating acetyl-CoA carboxylase (ACACA and ACACB) and hormone-sensitive lipase (LIPE) enzymes, respectively. Promotes lipolysis of lipid droplets by mediating phosphorylation of isoform 1 of CHKA (CHKalpha2). Regulates insulin-signaling and glycolysis by phosphorylating IRS1, PFKFB2 and PFKFB3. Involved in insulin receptor/INSR internalization. AMPK stimulates glucose uptake in muscle by increasing the translocation of the glucose transporter SLC2A4/GLUT4 to the plasma membrane, possibly by mediating phosphorylation of TBC1D4/AS160. Regulates transcription and chromatin structure by phosphorylating transcription regulators involved in energy metabolism such as CRTC2/TORC2, FOXO3, histone H2B, HDAC5, MEF2C, MLXIPL/ChREBP, EP300, HNF4A, p53/TP53, SREBF1, SREBF2 and PPARGC1A. Acts as a key regulator of glucose homeostasis in liver by phosphorylating CRTC2/TORC2, leading to CRTC2/TORC2 sequestration in the cytoplasm. In response to stress, phosphorylates 'Ser-36' of histone H2B (H2BS36ph), leading to promote transcription. Acts as a key regulator of cell growth and proliferation by phosphorylating FNIP1, TSC2, RPTOR, WDR24 and ATG1/ULK1: in response to nutrient limitation, negatively regulates the mTORC1 complex by phosphorylating RPTOR component of the mTORC1 complex and by phosphorylating and activating TSC2. Also phosphorylates and inhibits GATOR2 subunit WDR24 in response to nutrient limitation, leading to suppress glucose-mediated mTORC1 activation. In response to energetic stress, phosphorylates FNIP1, inactivating the non-canonical mTORC1 signaling, thereby promoting nuclear translocation of TFEB and TFE3, and inducing transcription of lysosomal or autophagy genes. In response to nutrient limitation, promotes autophagy by phosphorylating and activating ATG1/ULK1. In that process, it also activates WDR45/WIPI4. Phosphorylates CASP6, thereby preventing its autoprocessing and subsequent activation. AMPK also acts as a regulator of circadian rhythm by mediating phosphorylation of CRY1, leading to destabilize it. May regulate the Wnt signaling pathway by phosphorylating CTNNB1, leading to stabilize it. Also acts as a regulator of cellular polarity by remodeling the actin cytoskeleton; probably by indirectly activating myosin. Also phosphorylates CFTR, EEF2K, KLC1, NOS3 and SLC12A1. Plays an important role in the differential regulation of pro-autophagy (composed of PIK3C3, BECN1, PIK3R4 and UVRAG or ATG14) and non-autophagy (composed of PIK3C3, BECN1 and PIK3R4) complexes, in response to glucose starvation. Can inhibit the non-autophagy complex by phosphorylating PIK3C3 and can activate the pro-autophagy complex by phosphorylating BECN1. Upon glucose starvation, promotes ARF6 activation in a kinase-independent manner leading to cell migration. Upon glucose deprivation mediates the phosphorylation of ACSS2 at 'Ser-659', which exposes the nuclear localization signal of ACSS2, required for its interaction with KPNA1 and nuclear translocation. Upon stress, regulates mitochondrial fragmentation through phosphorylation of MTFR1L. This Homo sapiens (Human) protein is 5'-AMP-activated protein kinase catalytic subunit alpha-2.